Reading from the N-terminus, the 529-residue chain is Amino acid transporter heavy chain SLC3A2 (529 aa).

The tract at residues 1–20 (MSQDTEVDMKEVELNELEPE) is disordered. Topologically, residues 1–84 (MSQDTEVDMK…SPGWVRTRWA (84 aa)) are cytoplasmic. S2 is subject to Phosphoserine. T5 is subject to Phosphothreonine. A compositionally biased stretch (basic and acidic residues) spans 7–20 (VDMKEVELNELEPE). A Glycyl lysine isopeptide (Lys-Gly) (interchain with G-Cter in ubiquitin) cross-link involves residue K49. Position 65 is a phosphoserine (S65). K66 is covalently cross-linked (Glycyl lysine isopeptide (Lys-Gly) (interchain with G-Cter in SUMO2)). Residues 85-105 (LLLLFWLGWIGMLAGAVVIIV) form a helical; Signal-anchor for type II membrane protein membrane-spanning segment. At 106 to 529 (RAPRCRELPV…GLLLHFPYVA (424 aa)) the chain is on the extracellular side. Residue N266 is glycosylated (N-linked (GlcNAc...) asparagine). Phosphoserine is present on residues S307 and S309. 2 N-linked (GlcNAc...) asparagine glycosylation sites follow: N325 and N405. S426 is subject to Phosphoserine.

It belongs to the SLC3A transporter family. Disulfide-linked heterodimer with a non-glycosylated light chain (SLC7A5, SLC7A6, SLC7A7, SLC7A8, SLC7A10 or SLC7A11). Interacts with TLCD3A/CT120 and ICAM1. Constitutively and specifically associates with beta-1 integrins (alpha-2/beta-1, alpha-3/beta-1, alpha-5/beta-1 and alpha-6/beta-1), but minimally with alpha-4/beta-1. Interacts with LAPTM4B; recruits SLC3A2 and SLC7A5 to lysosomes to promote leucine uptake into these organelles and is required for mTORC1 activation. Post-translationally, phosphorylation on Ser-307 or Ser-309 and on Ser-426 by ecto-protein kinases favors heterotypic cell-cell interactions. N-glycosylated; N-glycosylation is crucial for trafficking and stability of SLC3A2 to the plasma membrane.

Its subcellular location is the apical cell membrane. The protein localises to the cell membrane. The protein resides in the cell junction. It localises to the lysosome membrane. It is found in the melanosome. Its subcellular location is the basolateral cell membrane. Functionally, acts as a chaperone that facilitates biogenesis and trafficking of functional transporters heterodimers to the plasma membrane. Forms heterodimer with SLC7 family transporters (SLC7A5, SLC7A6, SLC7A7, SLC7A8, SLC7A10 and SLC7A11), a group of amino-acid antiporters. Heterodimers function as amino acids exchangers, the specificity of the substrate depending on the SLC7A subunit. Heterodimers formed by SLC3A2/SLC7A6 or SLC3A2/SLC7A7 mediate the uptake of dibasic amino acids. Heterodimer SLC3A2/SLC7A11 functions as an antiporter by mediating the exchange of extracellular anionic L-cystine and intracellular L-glutamate across the cellular plasma membrane. SLC3A2/SLC7A10 translocates small neutral L- and D-amino acids across the plasma membrane. SLC3A2/SLC75 or SLC3A2/SLC7A8 translocates neutral amino acids with broad specificity, thyroid hormones and L-DOPA. SLC3A2 is essential for plasma membrane localization, stability, and the transport activity of SLC7A5 and SLC7A8. When associated with LAPTM4B, the heterodimer SLC7A5 is recruited to lysosomes to promote leucine uptake into these organelles, and thereby mediates mTORC1 activation. Modulates integrin-related signaling and is essential for integrin-dependent cell spreading, migration and tumor progression. The chain is Amino acid transporter heavy chain SLC3A2 from Oryctolagus cuniculus (Rabbit).